Here is a 90-residue protein sequence, read N- to C-terminus: Acylphosphatase (90 aa).

In terms of domain architecture, Acylphosphatase-like spans 5 to 90 (GCKVIVSGIV…YQKTNDFIAC (86 aa)). Active-site residues include R20 and N38.

The protein belongs to the acylphosphatase family.

It catalyses the reaction an acyl phosphate + H2O = a carboxylate + phosphate + H(+). The protein is Acylphosphatase (acyP) of Psychromonas ingrahamii (strain DSM 17664 / CCUG 51855 / 37).